Consider the following 305-residue polypeptide: GMP synthase [glutamine-hydrolyzing] subunit B (305 aa).

Positions 2–185 constitute a GMPS ATP-PPase domain; it reads VNVDEFIEEA…LDLEEIISER (184 aa). 29–35 lines the ATP pocket; it reads SGGVDSS.

As to quaternary structure, heterodimer composed of a glutamine amidotransferase subunit (A) and a GMP-binding subunit (B).

It carries out the reaction XMP + L-glutamine + ATP + H2O = GMP + L-glutamate + AMP + diphosphate + 2 H(+). The protein operates within purine metabolism; GMP biosynthesis; GMP from XMP (L-Gln route): step 1/1. Its function is as follows. Catalyzes the synthesis of GMP from XMP. This chain is GMP synthase [glutamine-hydrolyzing] subunit B, found in Haloarcula marismortui (strain ATCC 43049 / DSM 3752 / JCM 8966 / VKM B-1809) (Halobacterium marismortui).